We begin with the raw amino-acid sequence, 43 residues long: uncharacterized protein (43 aa).

This is an uncharacterized protein from Saccharomyces cerevisiae (strain ATCC 204508 / S288c) (Baker's yeast).